The following is a 451-amino-acid chain: MPHSMSRAETLAPIHVVGGGLAGTEAAWQIAQLGVPVILSEMRPVRQSPAHHTDQLGELVCSNSFGALASDRAAGLLKEELRQLGSLVIATADRHAVPAGGALAVDRARFSQALTEAIANHPLITLRREEVTGIPEGIAVLCTGPLTSEPLAKALQAFTGLEYLSFFDASSPIVTGDSLNRAVVFQASRYDKGEAAYLNCPMTEAEYERFCQALVEAEQVPLKDFEKEERKFFEGCLPIEEMARRGKDTLRFGPLKPVGLVDPRTGSRPYAVVQLRQEDRAGKLWNLVGFQTNLKWGEQQRVFRLIPGLEAAEFVRFGVMHRNTFLNSPQLLLPTLQFRRRPTLLAAGQLVGTEGYACAVAGGWLAGQNAARLALGLPLITLPPETMMGSLFQFISSADPKHFQPMPANFGLLPELEGQKVRSKQERYARYRDRALAALAATGLVRQAQTA.

Position 18–23 (18–23 (GGGLAG)) interacts with FAD.

The protein belongs to the MnmG family. TrmFO subfamily. The cofactor is FAD.

It is found in the cytoplasm. It catalyses the reaction uridine(54) in tRNA + (6R)-5,10-methylene-5,6,7,8-tetrahydrofolate + NADH + H(+) = 5-methyluridine(54) in tRNA + (6S)-5,6,7,8-tetrahydrofolate + NAD(+). The catalysed reaction is uridine(54) in tRNA + (6R)-5,10-methylene-5,6,7,8-tetrahydrofolate + NADPH + H(+) = 5-methyluridine(54) in tRNA + (6S)-5,6,7,8-tetrahydrofolate + NADP(+). Its function is as follows. Catalyzes the folate-dependent formation of 5-methyl-uridine at position 54 (M-5-U54) in all tRNAs. This chain is Methylenetetrahydrofolate--tRNA-(uracil-5-)-methyltransferase TrmFO, found in Synechococcus sp. (strain JA-3-3Ab) (Cyanobacteria bacterium Yellowstone A-Prime).